We begin with the raw amino-acid sequence, 598 residues long: Serine/threonine-protein kinase PLK1 (598 aa).

The tract at residues 1-26 (MAQVAGKKLTVAPEAGKPPGIPGSSS) is disordered. Phosphoserine is present on residues S25 and S26. One can recognise a Protein kinase domain in the interval 44–296 (YLRGRFLGKG…IDDLLNDEFF (253 aa)). ATP-binding positions include 50-58 (LGKGGFAKC), K73, and E122. D167 acts as the Proton acceptor in catalysis. ATP is bound by residues 169–172 (KLGN) and D185. Residues 185–212 (DFGLATKVEYDGERKKTLCGTPNYIAPE) are activation loop. A Phosphothreonine modification is found at T201. Residues S260 and S326 each carry the phosphoserine; by autocatalysis modification. The D-box that targets the protein for proteasomal degradation in anaphase signature appears at 328–331 (RKPL). Positions 336–360 (KGQDSPLVEKQSVPAKEEEMQQPES) are disordered. Residue S340 is modified to Phosphoserine. The POLO box 1 domain maps to 404–482 (WVSKWVDYSD…LKYFRNYMSE (79 aa)). The linker stretch occupies residues 487–501 (AGANITPREGDELAR). The region spanning 504–586 (FLRTWFRTRS…ARTMVEKLQS (83 aa)) is the POLO box 2 domain. Residues 532–534 (HTK) are important for interaction with phosphorylated proteins.

The protein belongs to the protein kinase superfamily. Ser/Thr protein kinase family. In terms of assembly, interacts with plk1 and kif2a. Interacts with fbxo5. Activated by phosphorylation on Thr-201 during M phase. In terms of processing, protein levels are down-regulated by proteasomal degradation in anaphase.

Its subcellular location is the nucleus. It localises to the cytoplasm. The protein resides in the cytoskeleton. It is found in the microtubule organizing center. The protein localises to the centrosome. Its subcellular location is the spindle. It localises to the midbody. It carries out the reaction L-seryl-[protein] + ATP = O-phospho-L-seryl-[protein] + ADP + H(+). The enzyme catalyses L-threonyl-[protein] + ATP = O-phospho-L-threonyl-[protein] + ADP + H(+). Functionally, plays multiple essential roles during mitosis. Phosphorylates the N-terminal domain of cdc25, which leads to cyclin b-cdc2 activation and mitotic entry. Also required for organization of bipolar spindles, and for exit from mitosis. Phosphorylates tpx2. In Xenopus tropicalis (Western clawed frog), this protein is Serine/threonine-protein kinase PLK1 (plk1).